The sequence spans 209 residues: Protein N-terminal glutamine amidohydrolase (209 aa).

Catalysis depends on residues Cys30, His83, and Asp99.

It belongs to the NTAQ1 family. Monomer. Widely expressed.

It localises to the cytoplasm. Its subcellular location is the cytosol. It is found in the nucleus. It catalyses the reaction N-terminal L-glutaminyl-[protein] + H2O = N-terminal L-glutamyl-[protein] + NH4(+). Functionally, mediates the side-chain deamidation of N-terminal glutamine residues to glutamate, an important step in N-end rule pathway of protein degradation. Conversion of the resulting N-terminal glutamine to glutamate renders the protein susceptible to arginylation, polyubiquitination and degradation as specified by the N-end rule. Does not act on substrates with internal or C-terminal glutamine and does not act on non-glutamine residues in any position. Does not deaminate acetylated N-terminal glutamine. With the exception of proline, all tested second-position residues on substrate peptides do not greatly influence the activity. In contrast, a proline at position 2, virtually abolishes deamidation of N-terminal glutamine. The chain is Protein N-terminal glutamine amidohydrolase (Ntaq1) from Mus musculus (Mouse).